The chain runs to 101 residues: Aspartyl/glutamyl-tRNA(Asn/Gln) amidotransferase subunit C (101 aa).

Residues 75–101 (QEALSGAPDAEEQRFRVPRILDEDVAS) are disordered. The span at 85–101 (EEQRFRVPRILDEDVAS) shows a compositional bias: basic and acidic residues.

The protein belongs to the GatC family. As to quaternary structure, heterotrimer of A, B and C subunits.

The catalysed reaction is L-glutamyl-tRNA(Gln) + L-glutamine + ATP + H2O = L-glutaminyl-tRNA(Gln) + L-glutamate + ADP + phosphate + H(+). The enzyme catalyses L-aspartyl-tRNA(Asn) + L-glutamine + ATP + H2O = L-asparaginyl-tRNA(Asn) + L-glutamate + ADP + phosphate + 2 H(+). In terms of biological role, allows the formation of correctly charged Asn-tRNA(Asn) or Gln-tRNA(Gln) through the transamidation of misacylated Asp-tRNA(Asn) or Glu-tRNA(Gln) in organisms which lack either or both of asparaginyl-tRNA or glutaminyl-tRNA synthetases. The reaction takes place in the presence of glutamine and ATP through an activated phospho-Asp-tRNA(Asn) or phospho-Glu-tRNA(Gln). In Salinispora arenicola (strain CNS-205), this protein is Aspartyl/glutamyl-tRNA(Asn/Gln) amidotransferase subunit C.